The sequence spans 493 residues: Hexokinase-like 1 protein (493 aa).

Positions 38 to 488 (ASTCPILTKF…SGLGAALLAA (451 aa)) constitute a Hexokinase domain. A hexokinase small subdomain region spans residues 93–232 (SGNEEGLFYA…GLDMRVSALV (140 aa)). G107, T108, and N109 together coordinate ADP. Residues T198, K199, N233, and D234 each contribute to the D-glucose site. Positions 233-477 (NDGVGTLAGA…SHVAIKHTKD (245 aa)) are hexokinase large subdomain. T257 contacts ADP. N260, E287, and E317 together coordinate D-glucose. A442 is a binding site for ADP.

Belongs to the hexokinase family.

It carries out the reaction a D-hexose + ATP = a D-hexose 6-phosphate + ADP + H(+). It catalyses the reaction D-fructose + ATP = D-fructose 6-phosphate + ADP + H(+). The enzyme catalyses D-glucose + ATP = D-glucose 6-phosphate + ADP + H(+). It functions in the pathway carbohydrate metabolism; hexose metabolism. Its pathway is carbohydrate degradation; glycolysis; D-glyceraldehyde 3-phosphate and glycerone phosphate from D-glucose: step 1/4. Functionally, fructose and glucose phosphorylating enzyme. In Arabidopsis thaliana (Mouse-ear cress), this protein is Hexokinase-like 1 protein.